Reading from the N-terminus, the 1187-residue chain is MDSSCFLVYRIFRFRKRNKNISSSLSSSSPPSSLSQNWLHPVFLSFRGEDVRKGLLSHIQKEFQRNGITPFIDNEMKRGGSIGPELLQAIRGSKIAIILLSRNYGSSKWCLDELVEIMKCREELGQTVMTVFYDVDPSDVRKQKGDFGKVFKKTCVGRPEEMVQRWKQALTSAANILGEDSRNWENEADMIIKISKDVSDVLSFTPSKDFDEFVGIEAHTTEITSLLQLDLEEVRMIGIWGPAGIGKTTISRVLYNKLFHQFQLGAIIDNIKVRYPRPCHDEYSAKLQLQKELLSQMINQKDMVVPHLGVAQERLKDKKVLLVLDDVDGLVQLDAMAKDVQWFGLGSRIIVVTQDLKLLKAHGIKYIYKVDFPTSDEALEIFCMYAFGEKSPKVGFEQIARTVTTLAGKLPLGLRVMGSYLRRMSKQEWAKSIPRLRTSLDDDIESVLKFSYNSLAEQEKDLFLHITCFFRRERIETLEVFLAKKSVDMRQGLQILADKSLLSLNLGNIEMHNLLVQLGLDIVRKQSIHKPGKRQFLVDTEDICEVLTDDTGTRTLIGIDLELSGVIEGVINISERAFERMCNLQFLRFHHPYGDRCHDILYLPQGLSHISRKLRLLHWERYPLTCLPPKFNPEFLVKINMRDSMLEKLWDGNEPIRNLKWMDLSFCVNLKELPDFSTATNLQELRLINCLSLVELPSSIGNATNLLELDLIDCSSLVKLPSSIGNLTNLKKLFLNRCSSLVKLPSSFGNVTSLKELNLSGCSSLLEIPSSIGNIVNLKKVYADGCSSLVQLPSSIGNNTNLKELHLLNCSSLMECPSSMLNLTRLEDLNLSGCLSLVKLPSIGNVINLQSLYLSDCSSLMELPFTIENATNLDTLYLDGCSNLLELPSSIWNITNLQSLYLNGCSSLKELPSLVENAINLQSLSLMKCSSLVELPSSIWRISNLSYLDVSNCSSLLELNLVSHPVVPDSLILDAGDCESLVQRLDCFFQNPKIVLNFANCFKLNQEARDLIIQTSACRNAILPGEKVPAYFTYRATGDSLTVKLNQKYLLQSLRFKACLLLVEGQNKWPNWGMNLVTSREPDGHIVLYTPSSHLQGPLLMENLYTFEFELVVTSSEFVLEFRADRYKCALGRFDKFGVHVVWCHLDQYESKSPSCKPFWRDFPIVISNGQNILDAILKTPMPSINQ.

The TIR domain maps to 38–202 (WLHPVFLSFR…KISKDVSDVL (165 aa)). The active site involves Glu-113. Residues 217 to 478 (EAHTTEITSL…FFRRERIETL (262 aa)) form the NB-ARC domain. 14 LRR repeats span residues 498–522 (DKSLLSLNLGNIEMHNLLVQLGLDI), 611–633 (SRKLRLLHWERYPLTCLPPKFNP), 635–658 (FLVKINMRDSMLEKLWDGNEPIRN), 660–679 (KWMDLSFCVNLKELPDFSTA), 680–703 (TNLQELRLINCLSLVELPSSIGNA), 704–727 (TNLLELDLIDCSSLVKLPSSIGNL), 728–750 (TNLKKLFLNRCSSLVKLPSSFGN), 752–775 (TSLKELNLSGCSSLLEIPSSIGNI), 799–823 (NTNLKELHLLNCSSLMECPSSMLNL), 824–849 (TRLEDLNLSGCLSLVKLPSIGNVINL), 870–894 (ATNLDTLYLDGCSNLLELPSSIWNI), 895–918 (TNLQSLYLNGCSSLKELPSLVENA), 920–942 (NLQSLSLMKCSSLVELPSSIWRI), and 953–974 (CSSLLELNLVSHPVVPDSLILD).

The enzyme catalyses NAD(+) + H2O = ADP-D-ribose + nicotinamide + H(+). Functionally, TIR-NB-LRR receptor-like protein that contributes to disease resistance induced by the Pseudomonas syringae type III effector AvrB. Acts additively with RPM1 to generate a full disease resistance response to P.syringae expressing this type III effector. The protein is Disease resistance protein TAO1 of Arabidopsis thaliana (Mouse-ear cress).